Consider the following 273-residue polypeptide: Small ribosomal subunit protein uS2 (273 aa).

Belongs to the universal ribosomal protein uS2 family.

This chain is Small ribosomal subunit protein uS2, found in Mycolicibacterium vanbaalenii (strain DSM 7251 / JCM 13017 / BCRC 16820 / KCTC 9966 / NRRL B-24157 / PYR-1) (Mycobacterium vanbaalenii).